Here is a 738-residue protein sequence, read N- to C-terminus: Junction plakoglobin (738 aa).

ARM repeat units follow at residues 128–167, 168–211, 212–251, 254–293, 294–337, 338–377, 379–416, 419–460, 466–506, 508–547, 570–609, and 611–657; these read NYQD…QLSK, KEAS…LSHH, REGL…NLLL, EGAK…LLAY, GNQE…LSVC, PSNK…NLSD, ATKQ…NLTC, GRNK…HLTS, EVAQ…NLAL, PANH…QPYT, PVNR…ELAQ, and KEAA…ADYR.

This sequence belongs to the beta-catenin family. In terms of assembly, homodimer.

The protein localises to the cell junction. It localises to the adherens junction. It is found in the desmosome. Its subcellular location is the cytoplasm. The protein resides in the cytoskeleton. The protein localises to the membrane. Functionally, common junctional plaque protein. The membrane-associated plaques are architectural elements in an important strategic position to influence the arrangement and function of both the cytoskeleton and the cells within the tissue. The presence of plakoglobin in both the desmosomes and in the intermediate junctions suggests that it plays a central role in the structure and function of submembranous plaques. The polypeptide is Junction plakoglobin (jup) (Xenopus laevis (African clawed frog)).